A 310-amino-acid polypeptide reads, in one-letter code: Tryptophan 2,3-dioxygenase (310 aa).

The tract at residues 1–39 (MQPPGNDAPAGCPFSGARAQGTQAAHEAPHVPGDAGEQA) is disordered. Substrate is bound by residues 79 to 83 (FIIQH), Tyr141, and Arg145. His268 lines the heme pocket. Thr282 lines the substrate pocket.

Belongs to the tryptophan 2,3-dioxygenase family. Homotetramer. It depends on heme as a cofactor.

The catalysed reaction is L-tryptophan + O2 = N-formyl-L-kynurenine. The protein operates within amino-acid degradation; L-tryptophan degradation via kynurenine pathway; L-kynurenine from L-tryptophan: step 1/2. In terms of biological role, heme-dependent dioxygenase that catalyzes the oxidative cleavage of the L-tryptophan (L-Trp) pyrrole ring and converts L-tryptophan to N-formyl-L-kynurenine. Catalyzes the oxidative cleavage of the indole moiety. The sequence is that of Tryptophan 2,3-dioxygenase from Burkholderia multivorans (strain ATCC 17616 / 249).